Consider the following 366-residue polypeptide: Ferredoxin--NADP reductase (366 aa).

FAD contacts are provided by D51, Q59, Y64, V104, F139, D308, and T349.

This sequence belongs to the ferredoxin--NADP reductase type 2 family. Homodimer. FAD is required as a cofactor.

The enzyme catalyses 2 reduced [2Fe-2S]-[ferredoxin] + NADP(+) + H(+) = 2 oxidized [2Fe-2S]-[ferredoxin] + NADPH. The protein is Ferredoxin--NADP reductase of Polaromonas sp. (strain JS666 / ATCC BAA-500).